Reading from the N-terminus, the 212-residue chain is uncharacterized protein (212 aa).

Transmembrane regions (helical) follow at residues 34–54, 59–79, 126–146, and 171–191; these read IFGI…PAPG, FGVL…ELWL, ILMG…IPGT, and AGMI…YVFF.

The protein to R.meliloti ExoD.

Its subcellular location is the cell membrane. This is an uncharacterized protein from Synechocystis sp. (strain ATCC 27184 / PCC 6803 / Kazusa).